Consider the following 204-residue polypeptide: Ras-related protein Rab-7L1 (204 aa).

Residues Ser-33, Lys-34, His-35, Tyr-36, Lys-37, and Thr-39 each contribute to the GTP site. Positions 36 to 44 (YKSTVGVDF) match the Effector region motif. Thr-71 bears the Phosphothreonine; by LRRK2 mark. Residue Ser-72 is modified to Phosphoserine. Residues Lys-126, Val-156, and Lys-157 each contribute to the GTP site. S-geranylgeranyl cysteine attachment occurs at residues Cys-203 and Cys-204.

The protein belongs to the small GTPase superfamily. Rab family. Interacts with LRRK2 (via the N-terminus); this interaction is direct and stimulates kinase activity.

The protein resides in the cell membrane. Its subcellular location is the cytoplasm. It localises to the perinuclear region. It is found in the golgi apparatus. The protein localises to the golgi apparatus membrane. The protein resides in the trans-Golgi network. Its subcellular location is the cytoskeleton. Functionally, the small GTPases Rab are key regulators in vesicle trafficking. Essential for maintaining the integrity of endosome-trans-Golgi network structure. Together with LRRK2, plays a role in the retrograde trafficking pathway for recycling proteins, such as mannose 6 phosphate receptor (M6PR), between lysosomes and the Golgi apparatus in a retromer-dependent manner. Recruits LRRK2 to the Golgi apparatus and stimulates LRRK2 kinase activity. Stimulates phosphorylation of RAB10 'Thr-73' by LRRK2. Also regulates neuronal process morphology in the intact central nervous system (CNS). This Mus musculus (Mouse) protein is Ras-related protein Rab-7L1 (Rab29).